We begin with the raw amino-acid sequence, 329 residues long: Olfactory receptor 52L1 (329 aa).

Topologically, residues 1-43 (MTLVSFFSFLSKPLIMLLSNSSWRLSQPSFLLVGIPGLEESQH) are extracellular. N-linked (GlcNAc...) asparagine glycosylation occurs at Asn-20. The helical transmembrane segment at 44–64 (WIALPLGILYLLALVGNVTIL) threads the bilayer. The Cytoplasmic segment spans residues 65–72 (FIIWMDPS). The helical transmembrane segment at 73–93 (LHQSMYLFLSMLAAIDLVLAS) threads the bilayer. Topologically, residues 94–117 (STAPKALAVLLVHAHEIGYIVCLI) are extracellular. A disulfide bridge links Cys-115 with Cys-207. Residues 118–138 (QMFFIHAFSSMESGVLVAMAL) form a helical membrane-spanning segment. At 139-157 (DRYVAICHPLHHSTILHPG) the chain is on the cytoplasmic side. Residues 158–178 (VIGRIGMVVLVRGLLLLIPFP) form a helical membrane-spanning segment. Over 179–214 (ILLGTLIFCQATIIGHAYCEHMAVVKLACSETTVNR) the chain is Extracellular. A helical transmembrane segment spans residues 215–235 (AYGLTMALLVIGLDVLAIGVS). At 236–255 (YAHILQAVLKVPGSEARLKA) the chain is on the cytoplasmic side. A helical transmembrane segment spans residues 256–276 (FSTCGSHICVILVFYVPGIFS). Topologically, residues 277 to 291 (FLTHRFGHHVPHHVH) are extracellular. Residues 292–312 (VLLATRYLLMPPALNPLVYGV) traverse the membrane as a helical segment. Over 313 to 329 (KTQQIRQRVLRVFTQKD) the chain is Cytoplasmic.

It belongs to the G-protein coupled receptor 1 family.

The protein localises to the cell membrane. Odorant receptor. This chain is Olfactory receptor 52L1 (OR52L1), found in Homo sapiens (Human).